Consider the following 365-residue polypeptide: Endophilin-B1 (365 aa).

Position 1 is an N-acetylmethionine (methionine 1). Residues 1–30 form a membrane-binding amphipathic helix region; the sequence is MNIMDFNVKKLAADAGTFLSRAVQFTEEKL. Positions 1-37 are required for membrane binding; sequence MNIMDFNVKKLAADAGTFLSRAVQFTEEKLGQAEKTE. One can recognise a BAR domain in the interval 27-261; sequence EEKLGQAEKT…LGSFPSNYLS (235 aa). Threonine 145 is subject to Phosphothreonine; by CDK5. Positions 155-186 form a coiled coil; it reads YKTIAKERKLLQNKRLDLDAAKTRLKKAKAAE. Positions 305-365 constitute an SH3 domain; it reads SNNRKARVLY…VPITYLELLN (61 aa).

Belongs to the endophilin family. In terms of assembly, homodimer, and heterodimer with SH3GLB2. Binds BAX; induction of apoptosis augments BAX binding. Binds DNM1, HTT, AMPH, BIN1 and ARFGAP1. Interacts with UVRAG; UVRAG bridges the interaction to BECN1 indicative for an association with the PI3K complex II (PI3KC3-C2). Isoform 3 interacts with PPP1CC; this interaction leads to the inhibition of phosphatase activity. In terms of processing, phosphorylated at Thr-145 by CDK5; this phosphorylation is required for autophagy induction in starved neurons and facilitates homodimerization. In terms of tissue distribution, isoform 1 is widely expressed. Isoform 2 is brain-specific. Isoform 3 is predominantly expressed in testis, but it is also detected in liver and, at much lower levels, in skin, stomach and ovary.

It localises to the cytoplasm. The protein localises to the golgi apparatus membrane. The protein resides in the mitochondrion outer membrane. Its subcellular location is the cytoplasmic vesicle. It is found in the autophagosome membrane. It localises to the midbody. Functionally, may be required for normal outer mitochondrial membrane dynamics. Required for coatomer-mediated retrograde transport in certain cells. May recruit other proteins to membranes with high curvature. May promote membrane fusion. Involved in activation of caspase-dependent apoptosis by promoting BAX/BAK1 activation. Isoform 1 acts proapoptotic in fibroblasts. Involved in caspase-independent apoptosis during nutrition starvation and involved in the regulation of autophagy. Activates lipid kinase activity of PIK3C3 during autophagy probably by associating with the PI3K complex II (PI3KC3-C2). Associated with PI3KC3-C2 during autophagy may regulate the trafficking of ATG9A from the Golgi complex to the peripheral cytoplasm for the formation of autophagosomes by inducing Golgi membrane tubulation and fragmentation. Involved in regulation of degradative endocytic trafficking and cytokinesis, probably in the context of PI3KC3-C2. Isoform 2 acts antiapoptotic in neuronal cells; involved in maintenance of mitochondrial morphology and promotes neuronal viability. The polypeptide is Endophilin-B1 (Sh3glb1) (Mus musculus (Mouse)).